We begin with the raw amino-acid sequence, 159 residues long: Protein US8.5 (159 aa).

The tract at residues 27-107 (SSQPLDPEGP…APSPHPRPPG (81 aa)) is disordered. Residues 80–91 (SDERGPPRHDRP) are compositionally biased toward basic and acidic residues.

This sequence belongs to the HHV-1 US8.5 protein family. Phosphorylated.

It localises to the host nucleus. The protein resides in the host nucleolus. This Human herpesvirus 1 (strain 17) (HHV-1) protein is Protein US8.5.